The chain runs to 54 residues: Light-harvesting protein B-880 beta chain (54 aa).

Residues 1–20 (AEDRSSLSGVSDAEAKEFHA) are Cytoplasmic-facing. A bacteriochlorophyll contacts are provided by histidine 19 and histidine 37. Residues 21–43 (LFVSSFTAFIVIAVLAHVLAWAW) traverse the membrane as a helical segment. Residues 44-54 (RPWIPGPKGWA) lie on the Periplasmic side of the membrane.

It belongs to the antenna complex beta subunit family. As to quaternary structure, the core complex is formed by different alpha and beta chains, binding bacteriochlorophyll molecules, and arranged most probably in tetrameric structures disposed around the reaction center. The non-pigmented gamma chains may constitute additional components.

It is found in the cell inner membrane. Its function is as follows. Antenna complexes are light-harvesting systems, which transfer the excitation energy to the reaction centers. The chain is Light-harvesting protein B-880 beta chain from Rhodoblastus acidophilus (Rhodopseudomonas acidophila).